A 468-amino-acid chain; its full sequence is Ubiquinone biosynthesis monooxygenase COQ6, mitochondrial (468 aa).

Residues 1-28 (MAARLVSRCGAVRAAPHSGPLVSWRRWS) constitute a mitochondrion transit peptide.

The protein belongs to the UbiH/COQ6 family. As to quaternary structure, component of a multi-subunit COQ enzyme complex, composed of at least COQ3, COQ4, COQ5, COQ6, COQ7 and COQ9. Interacts with COQ8B and COQ7. The cofactor is FAD. As to expression, widely expressed.

It is found in the mitochondrion inner membrane. Its subcellular location is the golgi apparatus. The protein localises to the cell projection. It catalyses the reaction 4-hydroxy-3-(all-trans-decaprenyl)benzoate + 2 reduced [2Fe-2S]-[ferredoxin] + O2 + 2 H(+) = 3,4-dihydroxy-5-(all-trans-decaprenyl)benzoate + 2 oxidized [2Fe-2S]-[ferredoxin] + H2O. The enzyme catalyses 2-methoxy-6-(all-trans-decaprenyl)phenol + 2 reduced [2Fe-2S]-[ferredoxin] + O2 + 2 H(+) = 2-methoxy-6-(all-trans-decaprenyl)benzene-1,4-diol + 2 oxidized [2Fe-2S]-[ferredoxin] + H2O. The protein operates within cofactor biosynthesis; ubiquinone biosynthesis. FAD-dependent monooxygenase required for two non-consecutive steps during ubiquinone biosynthesis. Required for the C5-ring hydroxylation during ubiquinone biosynthesis by catalyzing the hydroxylation of 4-hydroxy-3-(all-trans-decaprenyl)benzoic acid to 3,4-dihydroxy-5-(all-trans-decaprenyl)benzoic acid. Also acts downstream of COQ4, for the C1-hydroxylation during ubiquinone biosynthesis by catalyzing the hydroxylation of 2-methoxy-6-(all-trans-decaprenyl)phenol to 2-methoxy-6-(all-trans-decaprenyl)benzene-1,4-diol. The electrons required for the hydroxylation reaction are funneled indirectly to COQ6 from NADPH via a ferredoxin/ferredoxin reductase system composed of FDX2 and FDXR. This is Ubiquinone biosynthesis monooxygenase COQ6, mitochondrial from Homo sapiens (Human).